The primary structure comprises 262 residues: Small ribosomal subunit protein eS1 (262 aa).

This sequence belongs to the eukaryotic ribosomal protein eS1 family. Component of the small ribosomal subunit. Mature ribosomes consist of a small (40S) and a large (60S) subunit. The 40S subunit contains about 33 different proteins and 1 molecule of RNA (18S). The 60S subunit contains about 49 different proteins and 3 molecules of RNA (25S, 5.8S and 5S).

The protein resides in the cytoplasm. This chain is Small ribosomal subunit protein eS1, found in Theileria annulata.